Consider the following 347-residue polypeptide: Phosphoribosylformylglycinamidine cyclo-ligase (347 aa).

This sequence belongs to the AIR synthase family.

The protein localises to the cytoplasm. It carries out the reaction 2-formamido-N(1)-(5-O-phospho-beta-D-ribosyl)acetamidine + ATP = 5-amino-1-(5-phospho-beta-D-ribosyl)imidazole + ADP + phosphate + H(+). It participates in purine metabolism; IMP biosynthesis via de novo pathway; 5-amino-1-(5-phospho-D-ribosyl)imidazole from N(2)-formyl-N(1)-(5-phospho-D-ribosyl)glycinamide: step 2/2. The protein is Phosphoribosylformylglycinamidine cyclo-ligase of Bacillus cytotoxicus (strain DSM 22905 / CIP 110041 / 391-98 / NVH 391-98).